The sequence spans 545 residues: ATP synthase subunit alpha (545 aa).

Residue 173 to 180 participates in ATP binding; the sequence is GDRQTGKS.

The protein belongs to the ATPase alpha/beta chains family. In terms of assembly, F-type ATPases have 2 components, CF(1) - the catalytic core - and CF(0) - the membrane proton channel. CF(1) has five subunits: alpha(3), beta(3), gamma(1), delta(1), epsilon(1). CF(0) has three main subunits: a(1), b(2) and c(9-12). The alpha and beta chains form an alternating ring which encloses part of the gamma chain. CF(1) is attached to CF(0) by a central stalk formed by the gamma and epsilon chains, while a peripheral stalk is formed by the delta and b chains.

It localises to the cell membrane. It catalyses the reaction ATP + H2O + 4 H(+)(in) = ADP + phosphate + 5 H(+)(out). Produces ATP from ADP in the presence of a proton gradient across the membrane. The alpha chain is a regulatory subunit. The polypeptide is ATP synthase subunit alpha (Pseudarthrobacter chlorophenolicus (strain ATCC 700700 / DSM 12829 / CIP 107037 / JCM 12360 / KCTC 9906 / NCIMB 13794 / A6) (Arthrobacter chlorophenolicus)).